Here is a 678-residue protein sequence, read N- to C-terminus: Macrolide export ATP-binding/permease protein MacB 1 (678 aa).

The ABC transporter domain occupies 11 to 249; it reads LRLENVSREF…PKMVDIPSVI (239 aa). Position 47-54 (47-54) interacts with ATP; the sequence is GTSGSGKS. The next 4 membrane-spanning stretches (helical) occupy residues 303-323, 558-578, 608-628, and 641-661; these read ALTMLGIIIGIASVVSVVALG, IAVISLIVGGIGVMNIMLVSV, LVCLLGGSLGVALSLGIGLLF, and AASIITAFVCSSLIGVIFGFF.

Belongs to the ABC transporter superfamily. Macrolide exporter (TC 3.A.1.122) family. As to quaternary structure, homodimer. Part of the tripartite efflux system MacAB-TolC, which is composed of an inner membrane transporter, MacB, a periplasmic membrane fusion protein, MacA, and an outer membrane component, TolC. The complex forms a large protein conduit and can translocate molecules across both the inner and outer membranes. Interacts with MacA.

It localises to the cell inner membrane. Its function is as follows. Part of the tripartite efflux system MacAB-TolC. MacB is a non-canonical ABC transporter that contains transmembrane domains (TMD), which form a pore in the inner membrane, and an ATP-binding domain (NBD), which is responsible for energy generation. Confers resistance against macrolides. The protein is Macrolide export ATP-binding/permease protein MacB 1 of Yersinia pestis bv. Antiqua (strain Nepal516).